The chain runs to 224 residues: Putative tyrosine-protein phosphatase OCA6 (224 aa).

T2 carries the phosphothreonine modification. Residues 8-170 enclose the Tyrosine-protein phosphatase domain; that stretch reads QFSTVQPNLY…FNSEIEVDDL (163 aa). C114 acts as the Phosphocysteine intermediate in catalysis.

The protein belongs to the protein-tyrosine phosphatase family.

The protein resides in the cytoplasm. The catalysed reaction is O-phospho-L-tyrosyl-[protein] + H2O = L-tyrosyl-[protein] + phosphate. In terms of biological role, required for replication of Brome mosaic virus (BMV). The protein is Putative tyrosine-protein phosphatase OCA6 (OCA6) of Saccharomyces cerevisiae (strain ATCC 204508 / S288c) (Baker's yeast).